The primary structure comprises 817 residues: Dual specificity tyrosine-phosphorylation-regulated kinase mbk-2 (817 aa).

4 disordered regions span residues Met1–Pro46, Pro70–Gly148, Gly186–Gln206, and Leu301–Glu396. A compositionally biased stretch (polar residues) spans Phe7 to Gly25. Low complexity-rich tracts occupy residues Pro70 to Ser81 and Asn97 to Leu111. Polar residues-rich tracts occupy residues Ser122–Leu143 and Gly193–Gln206. Positions Asn303 to Gly318 are enriched in low complexity. Residues Leu327–Thr351 show a composition bias toward polar residues. The residue at position 362 (Ser362) is a Phosphoserine; by cdk-1. Positions Ser364–Gly392 are enriched in low complexity. A Protein kinase domain is found at Tyr461 to Leu774. ATP is bound by residues Ile467–Val475 and Lys490. Asp587 (proton acceptor) is an active-site residue. A Phosphotyrosine; by autocatalysis modification is found at Tyr621.

It belongs to the protein kinase superfamily. CMGC Ser/Thr protein kinase family. MNB/DYRK subfamily. In terms of assembly, part of a complex, consisting of pseudophosphatases egg-3, egg-4, egg-5 and kinase mbk-2; this complex is required for the oocyte-to-zygote transition. Interacts (via Tyr-619 and Tyr-621) with egg-4 (via tyrosine-protein phosphatase domain) and egg-5 (via tyrosine-protein phosphatase domain); mbk-2 tyrosine phosphorylation enhances the interaction. The interaction inhibits mbk-2 kinase activity and is required for mbk-2 oocyte cortex localization. Interacts (via N-terminus) with egg-3 (via tyrosine-protein phosphatase domain); the interaction does not affect mbk-2 kinase activity, is enhanced by mbk-2 tyrosine phosphorylation status and requires prior binding of mbk-2 to egg-4 and egg-5. It depends on Mg(2+) as a cofactor. Autophosphorylated. In L1 larvae, expressed widely in the nervous system, including head neurons and the ventral nerve cord. In adult animals, continues to be expressed in the nervous system and is also expressed in body wall muscle.

It localises to the cytoplasm. The protein localises to the cell cortex. It catalyses the reaction L-seryl-[protein] + ATP = O-phospho-L-seryl-[protein] + ADP + H(+). It carries out the reaction L-threonyl-[protein] + ATP = O-phospho-L-threonyl-[protein] + ADP + H(+). The enzyme catalyses L-tyrosyl-[protein] + ATP = O-phospho-L-tyrosyl-[protein] + ADP + H(+). With respect to regulation, activated during oocyte maturation by phosphorylation on Ser-362 by cdk-1. The pseudotyrosine phosphatases egg-4 and egg-5 sequester activated mbk-2 until the meiotic divisions and inhibit mbk-2 kinase activity directly, using a mixed-inhibition mechanism that does not involve tyrosine dephosphorylation. Its function is as follows. Required for oocyte-to-zygote transition in which it phosphorylates oocyte proteins, including mei-1, oma-1, oma-2, mex-5, and mex-6, modifying their activity and/or stability following meiosis. Through phosphorylation of P granule components including meg-1, promotes the disassembly of zygotic P granules in the anterior cytoplasm during zygote polarization, and thus plays a role in P granule distribution and segregation in early stage embryos following meiosis. Functions in both spindle positioning and in the posterior localization of cytoplasmic determinants, including pie-1, pos-1, and pgl-1, in early embryos. Involved in the asymmetric distribution of plk-1 at the 2-cell embryonic stage. This chain is Dual specificity tyrosine-phosphorylation-regulated kinase mbk-2, found in Caenorhabditis elegans.